The sequence spans 234 residues: 7-cyano-7-deazaguanine synthase (234 aa).

15–25 (LSGGLDSSTCL) is a binding site for ATP. The Zn(2+) site is built by Cys199, Cys208, Cys211, and Cys214.

This sequence belongs to the QueC family. Requires Zn(2+) as cofactor.

The catalysed reaction is 7-carboxy-7-deazaguanine + NH4(+) + ATP = 7-cyano-7-deazaguanine + ADP + phosphate + H2O + H(+). Its pathway is purine metabolism; 7-cyano-7-deazaguanine biosynthesis. Catalyzes the ATP-dependent conversion of 7-carboxy-7-deazaguanine (CDG) to 7-cyano-7-deazaguanine (preQ(0)). In Anaeromyxobacter dehalogenans (strain 2CP-C), this protein is 7-cyano-7-deazaguanine synthase.